The chain runs to 416 residues: Tyrosine--tRNA ligase (416 aa).

Tyr39 lines the L-tyrosine pocket. A 'HIGH' region motif is present at residues Cys44–His53. The L-tyrosine site is built by Tyr176 and Gln180. The 'KMSKS' region signature appears at Lys236–Thr240. ATP is bound at residue Lys239. The S4 RNA-binding domain maps to Ile349–Val414.

Belongs to the class-I aminoacyl-tRNA synthetase family. TyrS type 1 subfamily. As to quaternary structure, homodimer.

It is found in the cytoplasm. The enzyme catalyses tRNA(Tyr) + L-tyrosine + ATP = L-tyrosyl-tRNA(Tyr) + AMP + diphosphate + H(+). Its function is as follows. Catalyzes the attachment of tyrosine to tRNA(Tyr) in a two-step reaction: tyrosine is first activated by ATP to form Tyr-AMP and then transferred to the acceptor end of tRNA(Tyr). The polypeptide is Tyrosine--tRNA ligase (Wolbachia pipientis wMel).